A 161-amino-acid polypeptide reads, in one-letter code: Putative pre-16S rRNA nuclease (161 aa).

The protein belongs to the YqgF nuclease family.

Its subcellular location is the cytoplasm. In terms of biological role, could be a nuclease involved in processing of the 5'-end of pre-16S rRNA. In Prochlorococcus marinus (strain MIT 9313), this protein is Putative pre-16S rRNA nuclease.